The following is a 216-amino-acid chain: Probable GTP-binding protein EngB (216 aa).

Residues Gly-27–Ala-201 form the EngB-type G domain. GTP-binding positions include Gly-35 to Ser-42, Gly-62 to Leu-66, Asp-80 to Gly-83, Thr-147 to Asp-150, and Phe-180 to Ser-182. Mg(2+) contacts are provided by Ser-42 and Thr-64.

This sequence belongs to the TRAFAC class TrmE-Era-EngA-EngB-Septin-like GTPase superfamily. EngB GTPase family. Requires Mg(2+) as cofactor.

Its function is as follows. Necessary for normal cell division and for the maintenance of normal septation. In Aeromonas hydrophila subsp. hydrophila (strain ATCC 7966 / DSM 30187 / BCRC 13018 / CCUG 14551 / JCM 1027 / KCTC 2358 / NCIMB 9240 / NCTC 8049), this protein is Probable GTP-binding protein EngB.